Here is a 698-residue protein sequence, read N- to C-terminus: Superoxide-generating NADPH oxidase heavy chain subunit B (698 aa).

2 disordered regions span residues 1 to 68 and 134 to 158; these read MNEK…NITP and NDQVNSNTDNNNNTNNNNNTNNNKN. The Cytoplasmic segment spans residues 1-184; it reads MNEKKELQQE…KIRGWWWHRG (184 aa). 2 stretches are compositionally biased toward polar residues: residues 16-25 and 33-53; these read FQTPKNQQLE and EISSTGNETSESGISSPPISQ. 2 stretches are compositionally biased toward low complexity: residues 54–65 and 138–156; these read NDNSNNENESLN and NSNTDNNNNTNNNNNTNNN. A helical transmembrane segment spans residues 185 to 205; sequence ISTYIMLFYIALNIGVGVHMF. Over 206 to 229 the chain is Extracellular; it reads YNMYHSDIFKFLGLSFCFSRTAAR. The region spanning 225-375 is the Ferric oxidoreductase domain; the sequence is RTAARLINLN…LFIPFYILLC (151 aa). A helical membrane pass occupies residues 230–250; the sequence is LINLNSAVILLPVLRNFLSWL. Residues 251 to 269 lie on the Cytoplasmic side of the membrane; that stretch reads RGTIVNNYIPIDKHLNFHK. 2 residues coordinate heme: H268 and H282. Residues 270–290 traverse the membrane as a helical segment; it reads LCAFMLFCCTIIHCVGHYISF. At 291–324 the chain is on the extracellular side; the sequence is KKINDDVLKIDDGKSVAGDYLNININNFPDEKYL. A helical transmembrane segment spans residues 325-345; the sequence is FFKSVPGITGHIMLLILILIV. Over 346-355 the chain is Cytoplasmic; the sequence is SSSMWRIRRP. Residues 356–376 traverse the membrane as a helical segment; that stretch reads MFEIFWYVHHLFIPFYILLCF. Residues H364 and H377 each contribute to the heme site. Residues 377–388 lie on the Extracellular side of the membrane; the sequence is HGYSKILKKDPQ. A helical transmembrane segment spans residues 389–409; the sequence is SWMWIIAPFILYSIERLIRIA. In terms of domain architecture, FAD-binding FR-type spans 404–528; it reads RLIRIARSKK…DGPFGAPAEN (125 aa). Residues 410–698 lie on the Cytoplasmic side of the membrane; the sequence is RSKKRVILEK…CHLIFHKENF (289 aa). FAD is bound at residue 460–466; sequence HPFTITS.

As to quaternary structure, composed of a heavy chain and a light chain. FAD is required as a cofactor.

The protein resides in the membrane. Its function is as follows. Critical component of the membrane-bound oxidase that generates superoxide. It is the terminal component of a respiratory chain that transfers single electrons from cytoplasmic NADPH across the plasma membrane to molecular oxygen on the exterior. This Dictyostelium discoideum (Social amoeba) protein is Superoxide-generating NADPH oxidase heavy chain subunit B (noxB).